A 243-amino-acid polypeptide reads, in one-letter code: Nuclear ubiquitous casein and cyclin-dependent kinase substrate 1 (243 aa).

A disordered region spans residues 1–243; that stretch reads MSRPVRNRKV…SEDDAQSGED (243 aa). At tyrosine 13 the chain carries Phosphotyrosine. Serine 14 and serine 19 each carry phosphoserine. Phosphotyrosine is present on tyrosine 26. The span at 35-51 shows a compositional bias: basic residues; that stretch reads KKIRSSPREAKNKRRSG. Phosphoserine is present on residues serine 54, serine 58, serine 61, serine 73, serine 75, and serine 79. Positions 64–77 are enriched in basic and acidic residues; it reads KDVKTKKDDSHSAE. A compositionally biased stretch (low complexity) spans 91–100; sequence QQRQAASKAA. Acidic residues predominate over residues 111–124; that stretch reads VGSEEEQEEEDEAP. Serine 113, serine 130, serine 132, and serine 144 each carry phosphoserine. Residues 132 to 145 are compositionally biased toward acidic residues; it reads SDEDFLVEDDDDSD. Over residues 149–174 the composition is skewed to basic residues; that stretch reads SKKKNKKMVKKSKPERKEKKMPKPRL. Residue threonine 179 is modified to Phosphothreonine. A Phosphoserine modification is found at serine 181. Residues 197–206 show a composition bias toward basic and acidic residues; it reads ASKEKTPSPK. Residue threonine 202 is modified to Phosphothreonine. Phosphoserine occurs at positions 204, 214, 223, 229, 234, and 240. Residues 232-243 are compositionally biased toward acidic residues; that stretch reads EGSEDDAQSGED.

As to quaternary structure, does not interact with RAD51. In terms of processing, phosphorylated in an ATM-dependent manner in response to DNA damage. Phosphorylated by CDK1 and casein kinase.

It is found in the nucleus. The protein localises to the chromosome. In terms of biological role, chromatin-associated protein involved in DNA repair by promoting homologous recombination (HR). Binds double-stranded DNA (dsDNA) and secondary DNA structures, such as D-loop structures, but with less affinity than RAD51AP1. This chain is Nuclear ubiquitous casein and cyclin-dependent kinase substrate 1 (NUCKS1), found in Bos taurus (Bovine).